The following is a 356-amino-acid chain: tRNA N6-adenosine threonylcarbamoyltransferase (356 aa).

2 residues coordinate Fe cation: histidine 131 and histidine 135. Residues 154–158 (LVSGG), aspartate 187, glycine 200, and asparagine 289 contribute to the substrate site. Position 317 (aspartate 317) interacts with Fe cation.

The protein belongs to the KAE1 / TsaD family. It depends on Fe(2+) as a cofactor.

The protein resides in the cytoplasm. It carries out the reaction L-threonylcarbamoyladenylate + adenosine(37) in tRNA = N(6)-L-threonylcarbamoyladenosine(37) in tRNA + AMP + H(+). Functionally, required for the formation of a threonylcarbamoyl group on adenosine at position 37 (t(6)A37) in tRNAs that read codons beginning with adenine. Is involved in the transfer of the threonylcarbamoyl moiety of threonylcarbamoyl-AMP (TC-AMP) to the N6 group of A37, together with TsaE and TsaB. TsaD likely plays a direct catalytic role in this reaction. The chain is tRNA N6-adenosine threonylcarbamoyltransferase from Ruthia magnifica subsp. Calyptogena magnifica.